The sequence spans 52 residues: ATP synthase F(1) complex subunit epsilon, mitochondrial (52 aa).

An N6-acetyllysine; alternate mark is found at Lys21, Lys32, and Lys37. Lys21, Lys32, and Lys37 each carry N6-succinyllysine; alternate. Lys44 carries the N6-acetyllysine modification.

The protein belongs to the eukaryotic ATPase epsilon family. Component of the ATP synthase complex composed at least of ATP5F1A/subunit alpha, ATP5F1B/subunit beta, ATP5MC1/subunit c (homooctomer), MT-ATP6/subunit a, MT-ATP8/subunit 8, ATP5ME/subunit e, ATP5MF/subunit f, ATP5MG/subunit g, ATP5MK/subunit k, ATP5MJ/subunit j, ATP5F1C/subunit gamma, ATP5F1D/subunit delta, ATP5F1E/subunit epsilon, ATP5PF/subunit F6, ATP5PB/subunit b, ATP5PD/subunit d, ATP5PO/subunit OSCP. ATP synthase complex consists of a soluble F(1) head domain (subunits alpha(3) and beta(3)) - the catalytic core - and a membrane F(0) domain - the membrane proton channel (subunits c, a, 8, e, f, g, k and j). These two domains are linked by a central stalk (subunits gamma, delta, and epsilon) rotating inside the F1 region and a stationary peripheral stalk (subunits F6, b, d, and OSCP).

Its subcellular location is the mitochondrion. It is found in the mitochondrion inner membrane. Functionally, subunit epsilon, of the mitochondrial membrane ATP synthase complex (F(1)F(0) ATP synthase or Complex V) that produces ATP from ADP in the presence of a proton gradient across the membrane which is generated by electron transport complexes of the respiratory chain. ATP synthase complex consist of a soluble F(1) head domain - the catalytic core - and a membrane F(1) domain - the membrane proton channel. These two domains are linked by a central stalk rotating inside the F(1) region and a stationary peripheral stalk. During catalysis, ATP synthesis in the catalytic domain of F(1) is coupled via a rotary mechanism of the central stalk subunits to proton translocation. In vivo, can only synthesize ATP although its ATP hydrolase activity can be activated artificially in vitro. May be essential for the assembly of F(1) and may play an important role in the incorporation of the hydrophobic subunit c into the F(1)-c oligomer rotor of the mitochondrial ATP synthase complex. The protein is ATP synthase F(1) complex subunit epsilon, mitochondrial of Mus musculus (Mouse).